A 218-amino-acid chain; its full sequence is Putative transposase InsD for insertion element IS2E (218 aa).

An Integrase catalytic domain is found at 23–206 (KPAVPPSKRA…SPREYLRQRA (184 aa)).

Functionally, involved in the transposition of the insertion sequence IS2. This is Putative transposase InsD for insertion element IS2E (insD8) from Escherichia coli (strain K12).